The following is a 202-amino-acid chain: Small ribosomal subunit protein uS4c (202 aa).

The segment at 13–37 (RRPGVSPGLTSKTLKSKSNYIDRST) is disordered. Polar residues predominate over residues 20–37 (GLTSKTLKSKSNYIDRST). The 64-residue stretch at 90 to 153 (MRLDNTIFRL…ESRSMISKNI (64 aa)) folds into the S4 RNA-binding domain.

The protein belongs to the universal ribosomal protein uS4 family. As to quaternary structure, part of the 30S ribosomal subunit. Contacts protein S5. The interaction surface between S4 and S5 is involved in control of translational fidelity.

It is found in the plastid. The protein resides in the chloroplast. Its function is as follows. One of the primary rRNA binding proteins, it binds directly to 16S rRNA where it nucleates assembly of the body of the 30S subunit. In terms of biological role, with S5 and S12 plays an important role in translational accuracy. In Takakia lepidozioides (Moss), this protein is Small ribosomal subunit protein uS4c (rps4).